Reading from the N-terminus, the 260-residue chain is Indole-3-glycerol phosphate synthase (260 aa).

This sequence belongs to the TrpC family.

It catalyses the reaction 1-(2-carboxyphenylamino)-1-deoxy-D-ribulose 5-phosphate + H(+) = (1S,2R)-1-C-(indol-3-yl)glycerol 3-phosphate + CO2 + H2O. It participates in amino-acid biosynthesis; L-tryptophan biosynthesis; L-tryptophan from chorismate: step 4/5. In Acetivibrio thermocellus (strain ATCC 27405 / DSM 1237 / JCM 9322 / NBRC 103400 / NCIMB 10682 / NRRL B-4536 / VPI 7372) (Clostridium thermocellum), this protein is Indole-3-glycerol phosphate synthase.